A 190-amino-acid polypeptide reads, in one-letter code: Heme-binding protein 1 (190 aa).

It belongs to the HEBP family. In terms of assembly, monomer. In terms of tissue distribution, ubiquitously expressed. Extremely abundant in liver.

It is found in the cytoplasm. Its function is as follows. May bind free porphyrinogens that may be present in the cell and thus facilitate removal of these potentially toxic compound. Binds with a high affinity to one molecule of heme or porphyrins. It binds metalloporphyrins, free porphyrins and N-methylprotoporphyrin with similar affinities. This is Heme-binding protein 1 (Hebp1) from Mus musculus (Mouse).